Here is a 91-residue protein sequence, read N- to C-terminus: MARVTVQDAVEKIGNRFDLVLVAARRARQMQVGGKDPLVPEENDKTTVIALREIEEGLINNQILDVRERQEQQELEAAELQAVTAIAEGRR.

The protein belongs to the RNA polymerase subunit omega family. The RNAP catalytic core consists of 2 alpha, 1 beta, 1 beta' and 1 omega subunit. When a sigma factor is associated with the core the holoenzyme is formed, which can initiate transcription.

It carries out the reaction RNA(n) + a ribonucleoside 5'-triphosphate = RNA(n+1) + diphosphate. In terms of biological role, promotes RNA polymerase assembly. Latches the N- and C-terminal regions of the beta' subunit thereby facilitating its interaction with the beta and alpha subunits. The protein is DNA-directed RNA polymerase subunit omega of Shigella flexneri.